Here is a 630-residue protein sequence, read N- to C-terminus: L-amino-acid oxidase (630 aa).

Residues 1–21 (MAGLALRLVLAATLLGLAGSL) form the signal peptide. A disulfide bridge connects residues Cys-35 and Cys-198. N-linked (GlcNAc...) asparagine glycosylation is present at Asn-53. FAD is bound by residues 68-69 (VA), 88-89 (EA), Arg-96, and 112-115 (GAMR). Arg-115 contacts substrate. Asn-133 and Asn-219 each carry an N-linked (GlcNAc...) asparagine glycan. Val-286 contacts FAD. A substrate-binding site is contributed by Tyr-395. Residues Glu-479 and 486–491 (GWVETA) contribute to the FAD site. 486–487 (GW) contributes to the substrate binding site. Residues 532–554 (GERPEEQQAREEVSPDEQEPSHK) are disordered.

The protein belongs to the flavin monoamine oxidase family. FIG1 subfamily. FAD serves as cofactor. In terms of tissue distribution, primarily found in immune tissues. As to expression, primarily found in immune tissues, mostly in B-lymphocytes. Restricted to the testis, predominantly in Sertoli cells at the periphery of the ducts, and the brain, including Purkinje cells, hippocampus and mitral cells in the olfactory bulb. No isoform 2 expression in fetal tissues.

The protein localises to the secreted. The protein resides in the cytoplasmic vesicle. It is found in the secretory vesicle. It localises to the acrosome. Its subcellular location is the lysosome. It catalyses the reaction an L-alpha-amino acid + O2 + H2O = a 2-oxocarboxylate + H2O2 + NH4(+). It carries out the reaction L-tryptophan + O2 + H2O = indole-3-pyruvate + H2O2 + NH4(+). The enzyme catalyses L-phenylalanine + O2 + H2O = 3-phenylpyruvate + H2O2 + NH4(+). The catalysed reaction is L-tyrosine + O2 + H2O = 3-(4-hydroxyphenyl)pyruvate + H2O2 + NH4(+). It catalyses the reaction L-arginine + O2 + H2O = 5-guanidino-2-oxopentanoate + H2O2 + NH4(+). Its pathway is amino-acid degradation; L-tryptophan degradation via pyruvate pathway. In terms of biological role, secreted L-amino-acid oxidase that acts as a key immunoregulator. Has preference for L-aromatic amino acids: converts phenylalanine (Phe), tyrosine (Tyr) and tryptophan (Trp) to phenylpyruvic acid (PP), hydroxyphenylpyruvic acid (HPP), and indole-3-pyruvic acid (I3P), respectively. Also has weak L-arginine oxidase activity. Acts as a negative regulator of anti-tumor immunity by mediating Trp degradation via an indole pyruvate pathway that activates the transcription factor AHR. IL4I1-mediated Trp catabolism generates I3P, giving rise to indole metabolites (indole-3-acetic acid (IAA) and indole-3-aldehyde (I3A)) and kynurenic acid, which act as ligands for AHR, a ligand-activated transcription factor that plays important roles in immunity and cancer. AHR activation by indoles following IL4I1-mediated Trp degradation enhances tumor progression by promoting cancer cell motility and suppressing adaptive immunity. Also has an immunoregulatory function in some immune cell, probably by mediating Trp degradation and promoting downstream AHR activation: inhibits T-cell activation and proliferation, promotes the differentiation of naive CD4(+) T-cells into FOXP3(+) regulatory T-cells (Treg) and regulates the development and function of B-cells. Also regulates M2 macrophage polarization by inhibiting T-cell activation. Also has antibacterial properties by inhibiting growth of Gram negative and Gram positive bacteria through the production of NH4(+) and H2O2. This Mus musculus (Mouse) protein is L-amino-acid oxidase.